The chain runs to 274 residues: MVIQLYKTYTPSTRNGTVNGQVKSTRGKNLIYGQHRCGKGRNARGIITARHRGGGHKRLYRKIDFRRNEKDIYGRIVTIEYDPNRNAYICLIHYGNGEKRYILHPRGAIIGDSIVSGTEVSIKIGNALPLTEMPLGTAIHNIEITLGKGGQLARAAGAVAKLIAKEGKSATIKLPSGEVRLISKNCSATVGQVGNVGVNQKSLGRAGAKRWLGKRPVVRGVVMNPVDHPHGGGEGRAPIGRKKPTTPWGYPALGRKSRKRNKYSEKFILRHRSK.

The tract at residues 224–274 (NPVDHPHGGGEGRAPIGRKKPTTPWGYPALGRKSRKRNKYSEKFILRHRSK) is disordered.

It belongs to the universal ribosomal protein uL2 family. Part of the 50S ribosomal subunit.

Its subcellular location is the plastid. It is found in the chloroplast. The sequence is that of Large ribosomal subunit protein uL2c (rpl2) from Ipomoea purpurea (Common morning glory).